The primary structure comprises 453 residues: Aldehyde dehydrogenase, dimeric NADP-preferring (453 aa).

The residue at position 2 (serine 2) is an N-acetylserine. Lysine 178 carries the N6-acetyllysine modification. Glycine 188 to glycine 193 is a binding site for NAD(+). Lysine 194 carries the N6-acetyllysine modification. Active-site residues include glutamate 210 and cysteine 244.

The protein belongs to the aldehyde dehydrogenase family. Homodimer.

It localises to the cytoplasm. The catalysed reaction is an aldehyde + NAD(+) + H2O = a carboxylate + NADH + 2 H(+). The enzyme catalyses octanal + NAD(+) + H2O = octanoate + NADH + 2 H(+). Functionally, ALDHs play a major role in the detoxification of alcohol-derived acetaldehyde. They are involved in the metabolism of corticosteroids, biogenic amines, neurotransmitters, and lipid peroxidation. Oxidizes medium and long chain aldehydes into non-toxic fatty acids. Preferentially oxidizes aromatic aldehyde substrates. Comprises about 50 percent of corneal epithelial soluble proteins. May play a role in preventing corneal damage caused by ultraviolet light. This chain is Aldehyde dehydrogenase, dimeric NADP-preferring (ALDH3A1), found in Canis lupus familiaris (Dog).